A 159-amino-acid polypeptide reads, in one-letter code: Allergen Arg r 1 (159 aa).

The N-terminal stretch at 1–16 (MALIILLVACLSVVSA) is a signal peptide. Cystine bridges form between Cys50/Cys155 and Cys109/Cys134.

The protein belongs to the calycin superfamily. Histamine-binding salivary protein family. Post-translationally, not glycosylated.

The protein localises to the secreted. The chain is Allergen Arg r 1 from Argas reflexus (European pigeon tick).